Reading from the N-terminus, the 460-residue chain is Probable asparagine--tRNA ligase, mitochondrial (460 aa).

The protein belongs to the class-II aminoacyl-tRNA synthetase family.

Its subcellular location is the mitochondrion matrix. It carries out the reaction tRNA(Asn) + L-asparagine + ATP = L-asparaginyl-tRNA(Asn) + AMP + diphosphate + H(+). The chain is Probable asparagine--tRNA ligase, mitochondrial (asnS2) from Dictyostelium discoideum (Social amoeba).